Reading from the N-terminus, the 311-residue chain is Olfactory receptor 287 (311 aa).

The Extracellular portion of the chain corresponds to 1-27; that stretch reads MAWSTGQNLSTPGPFILLGFPGPRSMR. Asn8 carries an N-linked (GlcNAc...) asparagine glycan. A helical transmembrane segment spans residues 28–53; sequence IGLFLLFLVMYLLTVVGNLAIISLVG. The Cytoplasmic segment spans residues 54-60; it reads AHRCLQT. A helical membrane pass occupies residues 61–82; it reads PMYFFLCNLSFLEIWFTTACVP. Residues 83 to 103 lie on the Extracellular side of the membrane; the sequence is KTLATFAPRGGVISLAGCATQ. The cysteines at positions 100 and 192 are disulfide-linked. A helical membrane pass occupies residues 104–123; the sequence is MYFVFSLGCTEYFLLAVMAY. The Cytoplasmic portion of the chain corresponds to 124–142; the sequence is DRYLAICLPLRYGGIMTPG. Residues 143 to 161 traverse the membrane as a helical segment; that stretch reads LAMRLALGSWLCGFSAITV. Residues 162–199 are Extracellular-facing; it reads PATLIARLSFCGSRVINHFFCDISPWIVLSCTDTQVVE. A helical membrane pass occupies residues 200-222; the sequence is LVSFGIAFCVILGSCGITLVSYA. Residues 223–239 are Cytoplasmic-facing; that stretch reads YIITTIIKIPSARGRHR. The chain crosses the membrane as a helical span at residues 240 to 263; the sequence is AFSTCSSHLTVVLIWYGSTIFLHV. The Extracellular segment spans residues 264 to 275; it reads RTSVESSLDLTK. Residues 276-295 traverse the membrane as a helical segment; the sequence is AITVLNTIVTPVLNPFIYTL. The Cytoplasmic portion of the chain corresponds to 296 to 311; the sequence is RNKDVKEALRRTVKGK.

This sequence belongs to the G-protein coupled receptor 1 family. In terms of tissue distribution, olfactory epithelium.

It is found in the cell membrane. In terms of biological role, odorant receptor. The sequence is that of Olfactory receptor 287 (Olr287) from Rattus norvegicus (Rat).